Reading from the N-terminus, the 502-residue chain is ATP synthase subunit alpha (502 aa).

169 to 176 (GDRQTGKT) serves as a coordination point for ATP.

This sequence belongs to the ATPase alpha/beta chains family. As to quaternary structure, F-type ATPases have 2 components, CF(1) - the catalytic core - and CF(0) - the membrane proton channel. CF(1) has five subunits: alpha(3), beta(3), gamma(1), delta(1), epsilon(1). CF(0) has three main subunits: a(1), b(2) and c(9-12). The alpha and beta chains form an alternating ring which encloses part of the gamma chain. CF(1) is attached to CF(0) by a central stalk formed by the gamma and epsilon chains, while a peripheral stalk is formed by the delta and b chains.

The protein localises to the cell inner membrane. It carries out the reaction ATP + H2O + 4 H(+)(in) = ADP + phosphate + 5 H(+)(out). Its function is as follows. Produces ATP from ADP in the presence of a proton gradient across the membrane. The alpha chain is a regulatory subunit. The protein is ATP synthase subunit alpha of Nitratidesulfovibrio vulgaris (strain ATCC 29579 / DSM 644 / CCUG 34227 / NCIMB 8303 / VKM B-1760 / Hildenborough) (Desulfovibrio vulgaris).